Consider the following 491-residue polypeptide: Acetyl-coenzyme A carboxylase carboxyl transferase subunit beta, chloroplastic (491 aa).

The interval 28 to 56 (LGPIENTSESEDPNRNDMKKNSHSWGSRD) is disordered. The CoA carboxyltransferase N-terminal domain occupies 223-491 (LWVQCENCYG…FPLNKNSIEH (269 aa)). Positions 227, 230, 246, and 249 each coordinate Zn(2+). The segment at 227 to 249 (CENCYGLNYKKILKSKMNLCEQC) adopts a C4-type zinc-finger fold.

The protein belongs to the AccD/PCCB family. Acetyl-CoA carboxylase is a heterohexamer composed of biotin carboxyl carrier protein, biotin carboxylase and 2 subunits each of ACCase subunit alpha and ACCase plastid-coded subunit beta (accD). Zn(2+) is required as a cofactor.

The protein localises to the plastid. Its subcellular location is the chloroplast stroma. The catalysed reaction is N(6)-carboxybiotinyl-L-lysyl-[protein] + acetyl-CoA = N(6)-biotinyl-L-lysyl-[protein] + malonyl-CoA. The protein operates within lipid metabolism; malonyl-CoA biosynthesis; malonyl-CoA from acetyl-CoA: step 1/1. Its function is as follows. Component of the acetyl coenzyme A carboxylase (ACC) complex. Biotin carboxylase (BC) catalyzes the carboxylation of biotin on its carrier protein (BCCP) and then the CO(2) group is transferred by the transcarboxylase to acetyl-CoA to form malonyl-CoA. In Daucus carota (Wild carrot), this protein is Acetyl-coenzyme A carboxylase carboxyl transferase subunit beta, chloroplastic.